A 425-amino-acid polypeptide reads, in one-letter code: 2-oxoglutarate and iron-dependent oxygenase JMJD4 homolog (425 aa).

Residues 165–316 enclose the JmjC domain; that stretch reads AAQMPGYNFY…MVWQNLKNNL (152 aa). The Fe cation site is built by His-212, Asp-214, and His-284.

The protein belongs to the JMJD6 family. Fe(2+) serves as cofactor.

The protein resides in the nucleus. The protein localises to the cytoplasm. It catalyses the reaction L-lysyl-[protein] + 2-oxoglutarate + O2 = 4-hydroxy-L-lysyl-[protein] + succinate + CO2. Its function is as follows. Catalyzes the 2-oxoglutarate and iron-dependent C4-lysyl hydroxylation of eRF1 thereby promoting the translational termination efficiency of eRF1. May be involved in regulation of chromatin structure, promoting expansion of heterochromatin. This chain is 2-oxoglutarate and iron-dependent oxygenase JMJD4 homolog, found in Drosophila melanogaster (Fruit fly).